The sequence spans 630 residues: Conserved oligomeric Golgi complex subunit 6 (630 aa).

Belongs to the COG6 family. As to quaternary structure, component of the conserved oligomeric Golgi complex which is composed of eight different subunits and is required for normal Golgi morphology and localization.

It is found in the golgi apparatus membrane. Its function is as follows. Required for normal Golgi function. This chain is Conserved oligomeric Golgi complex subunit 6, found in Drosophila melanogaster (Fruit fly).